Consider the following 778-residue polypeptide: MKPFQLDLLFVCFFLFSQELGLQKRGCCLVLGYMAKDKFRRMNEGQVYSFSQQPQDQVVVSGQPVTLLCAIPEYDGFVLWIKDGLALGVGRDLSSYPQYLVVGNHLSGEHHLKILRAELQDDAVYECQAIQAAIRSRPARLTVLVPPDDPVILGGPVISLRAGDPLNLTCHADNAKPAASIIWLRKGEVINGATYSKTLLRDGKRESIVSTLFISPGDVENGQSIVCRATNKAIPGGKETSVTIDIQHPPLVNLSVEPQPVLEDNVVTFHCSAKANPAVTQYRWAKRGQIIKEASGEVYRTTVDYTYFSEPVSCEVTNALGSTNLSRTVDVYFGPRMTTEPQSLLVDLGSDAIFSCAWTGNPSLTIVWMKRGSGVVLSNEKTLTLKSVRQEDAGKYVCRAVVPRVGAGEREVTLTVNGPPIISSTQTQHALHGEKGQIKCFIRSTPPPDRIAWSWKENVLESGTSGRYTVETISTEEGVISTLTISNIVRADFQTIYNCTAWNSFGSDTEIIRLKEQGSEMKSGAGLEAESVPMAVIIGVAVGAGVAFLVLMATIVAFCCARSQRNLKGVVSAKNDIRVEIVHKEPASGREGEEHSTIKQLMMDRGEFQQDSVLKQLEVLKEEEKEFQNLKDPTNGYYSVNTFKEHHSTPTISLSSCQPDLRPAGKQRVPTGMSFTNIYSTLSGQGRLYDYGQRFVLGMGSSSIELCEREFQRGSLSDSSSFLDTQCDSSVSSSGKQDGYVQFDKASKASASSSHHSQSSSQNSDPSRPLQRRMQTHV.

The signal sequence occupies residues 1–21 (MKPFQLDLLFVCFFLFSQELG). Residues 22–535 (LQKRGCCLVL…GLEAESVPMA (514 aa)) are Extracellular-facing. 5 consecutive Ig-like C2-type domains span residues 48–142 (YSFS…ARLT), 147–243 (PDDP…TSVT), 249–330 (PPLV…RTVD), 335–415 (PRMT…VTLT), and 419–515 (PPII…IRLK). Cysteine 69 and cysteine 127 form a disulfide bridge. A glycan (N-linked (GlcNAc...) asparagine) is linked at asparagine 167. A disulfide bond links cysteine 170 and cysteine 227. Residue asparagine 253 is glycosylated (N-linked (GlcNAc...) asparagine). Cysteine 271 and cysteine 314 are joined by a disulfide. A glycan (N-linked (GlcNAc...) asparagine) is linked at asparagine 324. 2 cysteine pairs are disulfide-bonded: cysteine 356–cysteine 398 and cysteine 440–cysteine 499. N-linked (GlcNAc...) asparagine glycosylation occurs at asparagine 498. A helical membrane pass occupies residues 536–556 (VIIGVAVGAGVAFLVLMATIV). Over 557–778 (AFCCARSQRN…PLQRRMQTHV (222 aa)) the chain is Cytoplasmic. Positions 727–736 (CDSSVSSSGK) are enriched in polar residues. The segment at 727–778 (CDSSVSSSGKQDGYVQFDKASKASASSSHHSQSSSQNSDPSRPLQRRMQTHV) is disordered. A compositionally biased stretch (low complexity) spans 748 to 762 (KASASSSHHSQSSSQ).

It belongs to the immunoglobulin superfamily. As to quaternary structure, homodimer; mediates homophilic interactions to promote cell adhesion. Interacts with NPHS1; forms heterodimers with NPHS1. Interacts with NPHS2/podocin (via the C-terminus). Interacts with CASK. Interacts (via extracellular region) with MAP1B. Interacts (via extracellular region) with MYO16. Interacts (via intracellular region) with ATP1B1. Interacts (via intracellular region) with SHMT2. Interacts (via intracellular region) with UFC1. Undergoes proteolysis by a metalloprotease and gives rise to a soluble form. As to expression, expressed in fetal and adult brain. Also expressed in kidney, specifically in podocytes of kidney glomeruli. Also expressed in skeletal muscle.

It localises to the cell membrane. It is found in the secreted. Its function is as follows. Synaptic adhesion molecule required for the formation of target-specific synapses. Required for formation of target-specific synapses at hippocampal mossy fiber synapses. Required for formation of mossy fiber filopodia, the synaptic structures connecting dentate granule and GABA neurons. Probably acts as a homophilic adhesion molecule that promotes trans-cellular interactions and stabilize mossy fiber filipodia contact and subsequent synapse formation. Required for the coalescence of vomeronasal sensory neuron axons. May be involved in the hematopoietic supportive capacity of stroma cells; the secreted extracellular domain is directly responsible for supporting hematopoietic stem cells. The chain is Kin of IRRE-like protein 3 from Homo sapiens (Human).